Consider the following 677-residue polypeptide: Forkhead box protein P1 (677 aa).

A compositionally biased stretch (polar residues) spans 1 to 18 (MMQESGTETKSNGSAIQN). The disordered stretch occupies residues 1–43 (MMQESGTETKSNGSAIQNGSGGSNHLLECGGLREGRSNGETPA). Position 83 is a phosphoserine (Ser83). Residues 270 to 283 (IMNPHASTNGQLSV) show a composition bias toward polar residues. A disordered region spans residues 270–298 (IMNPHASTNGQLSVHTPKRESLSHEEHPH). Residues 286–298 (PKRESLSHEEHPH) are compositionally biased toward basic and acidic residues. Residue Lys287 forms a Glycyl lysine isopeptide (Lys-Gly) (interchain with G-Cter in SUMO2) linkage. The C2H2-type zinc finger occupies 306 to 331 (GVCKWPGCEAVCEDFQSFLKHLNSEH). The tract at residues 348-369 (VQQLELQLAKDKERLQAMMTHL) is leucine-zipper. Residues Lys372 and Lys377 each participate in a glycyl lysine isopeptide (Lys-Gly) (interchain with G-Cter in SUMO2) cross-link. The CTBP1-binding stretch occupies residues 382 to 386 (PLNLV). Positions 390–403 (TLSKSASEASPQSL) are enriched in polar residues. The disordered stretch occupies residues 390-422 (TLSKSASEASPQSLPHTPTTPTAPLTPVTQGPS). A compositionally biased stretch (low complexity) spans 404-418 (PHTPTTPTAPLTPVT). Residue Lys442 forms a Glycyl lysine isopeptide (Lys-Gly) (interchain with G-Cter in SUMO2) linkage. Residues 465-555 (RPPFTYASLI…PQKISGNPSL (91 aa)) constitute a DNA-binding region (fork-head). Residues 611–677 (EHTNSNESDS…EDEPVNEDME (67 aa)) form a disordered region. Residues 612-623 (HTNSNESDSSPG) are compositionally biased toward polar residues. Thr653 carries the phosphothreonine modification. Ser658 is subject to Phosphoserine. The segment covering 667 to 677 (YEDEPVNEDME) has biased composition (acidic residues).

Forms homodimers and heterodimers with FOXP2 and FOXP4. Dimerization is required for DNA-binding. Self-associates. Interacts with CTBP1. Interacts with NCOR2 and AR. Interacts with FOXP2. Interacts with TBR1. Interacts with AURKA; this interaction facilitates the phosphorylation of FOXP1, which suppresses the expression of FBXL7. Interacts with ZMYM2. Isoform 8 is specifically expressed in embryonic stem cells.

The protein localises to the nucleus. Its function is as follows. Transcriptional repressor. Can act with CTBP1 to synergistically repress transcription but CTPBP1 is not essential. Plays an important role in the specification and differentiation of lung epithelium. Acts cooperatively with FOXP4 to regulate lung secretory epithelial cell fate and regeneration by restricting the goblet cell lineage program; the function may involve regulation of AGR2. Essential transcriptional regulator of B-cell development. Involved in regulation of cardiac muscle cell proliferation. Involved in the columnar organization of spinal motor neurons. Promotes the formation of the lateral motor neuron column (LMC) and the preganglionic motor column (PGC) and is required for respective appropriate motor axon projections. The segment-appropriate generation of spinal cord motor columns requires cooperation with other Hox proteins. Can regulate PITX3 promoter activity; may promote midbrain identity in embryonic stem cell-derived dopamine neurons by regulating PITX3. Negatively regulates the differentiation of T follicular helper cells T(FH)s. Involved in maintenance of hair follicle stem cell quiescence; the function probably involves regulation of FGF18. Represses transcription of various pro-apoptotic genes and cooperates with NF-kappa B-signaling in promoting B-cell expansion by inhibition of caspase-dependent apoptosis. Binds to CSF1R promoter elements and is involved in regulation of monocyte differentiation and macrophage functions; repression of CSF1R in monocytes seems to involve NCOR2 as corepressor. Involved in endothelial cell proliferation, tube formation and migration indicative for a role in angiogenesis; the role in neovascularization seems to implicate suppression of SEMA5B. Can negatively regulate androgen receptor signaling. Acts as a transcriptional activator of the FBXL7 promoter; this activity is regulated by AURKA. Functionally, involved in transcriptional regulation in embryonic stem cells (ESCs). Stimulates expression of transcription factors that are required for pluripotency and decreases expression of differentiation-associated genes. Has distinct DNA-binding specifities as compared to the canonical form and preferentially binds DNA with the sequence 5'-CGATACAA-3' (or closely related sequences). Promotes ESC self-renewal and pluripotency. The protein is Forkhead box protein P1 (FOXP1) of Homo sapiens (Human).